Reading from the N-terminus, the 279-residue chain is Digeranylgeranylglyceryl phosphate synthase (279 aa).

The next 8 membrane-spanning stretches (helical) occupy residues 5 to 25, 27 to 47, 90 to 110, 127 to 147, 148 to 168, 198 to 218, 219 to 239, and 259 to 279; these read GFFAITRPANSVVAGLAAIVA, LIATGTLVYGVLLLMAVVLLV, FLLGLAVSVFTTPLCMGIALV, FFGNAAVAFLSASIFLFGGAY, AGWHALLDMLPIAAITFLAML, KTALIAFACTAFAIAASAVPY, LWWGGWYLAGIAAVDLVILFA, and TLLKLGMFASLVVFTLSAVFL.

This sequence belongs to the UbiA prenyltransferase family. DGGGP synthase subfamily. Requires Mg(2+) as cofactor.

The protein resides in the cell membrane. The enzyme catalyses sn-3-O-(geranylgeranyl)glycerol 1-phosphate + (2E,6E,10E)-geranylgeranyl diphosphate = 2,3-bis-O-(geranylgeranyl)-sn-glycerol 1-phosphate + diphosphate. The protein operates within membrane lipid metabolism; glycerophospholipid metabolism. In terms of biological role, prenyltransferase that catalyzes the transfer of the geranylgeranyl moiety of geranylgeranyl diphosphate (GGPP) to the C2 hydroxyl of (S)-3-O-geranylgeranylglyceryl phosphate (GGGP). This reaction is the second ether-bond-formation step in the biosynthesis of archaeal membrane lipids. In Methanoregula boonei (strain DSM 21154 / JCM 14090 / 6A8), this protein is Digeranylgeranylglyceryl phosphate synthase.